Reading from the N-terminus, the 435-residue chain is Ornithine decarboxylase (435 aa).

At Lys76 the chain carries N6-(pyridoxal phosphate)lysine. Pyridoxal 5'-phosphate is bound by residues Ser207, Gly244, and 283–286 (EPGR). 339–340 (FD) contributes to the substrate binding site. The active-site Proton donor; shared with dimeric partner is Cys368. Position 369 (Asp369) interacts with substrate. Tyr397 contacts pyridoxal 5'-phosphate.

It belongs to the Orn/Lys/Arg decarboxylase class-II family. In terms of assembly, homodimer. Only the dimer is catalytically active, as the active sites are constructed of residues from both monomers. Requires pyridoxal 5'-phosphate as cofactor.

It catalyses the reaction L-ornithine + H(+) = putrescine + CO2. It functions in the pathway amine and polyamine biosynthesis; putrescine biosynthesis via L-ornithine pathway; putrescine from L-ornithine: step 1/1. Its activity is regulated as follows. Inhibited by antizyme (AZ) in response to polyamine levels. AZ inhibits the assembly of the functional homodimer by binding to ODC monomers and targeting them for ubiquitin-independent proteolytic destruction by the 26S proteasome. Its function is as follows. Catalyzes the first and rate-limiting step of polyamine biosynthesis that converts ornithine into putrescine, which is the precursor for the polyamines, spermidine and spermine. Polyamines are essential for cell proliferation and are implicated in cellular processes, ranging from DNA replication to apoptosis. This is Ornithine decarboxylase (ODC) from Panagrellus redivivus (Microworm).